The following is a 512-amino-acid chain: ATP synthase subunit alpha (512 aa).

An ATP-binding site is contributed by 169 to 176 (GDRQTGKT).

Belongs to the ATPase alpha/beta chains family. F-type ATPases have 2 components, CF(1) - the catalytic core - and CF(0) - the membrane proton channel. CF(1) has five subunits: alpha(3), beta(3), gamma(1), delta(1), epsilon(1). CF(0) has four main subunits: a(1), b(1), b'(1) and c(9-12).

The protein localises to the cell inner membrane. It carries out the reaction ATP + H2O + 4 H(+)(in) = ADP + phosphate + 5 H(+)(out). In terms of biological role, produces ATP from ADP in the presence of a proton gradient across the membrane. The alpha chain is a regulatory subunit. The polypeptide is ATP synthase subunit alpha (Cereibacter sphaeroides (strain ATCC 17025 / ATH 2.4.3) (Rhodobacter sphaeroides)).